Consider the following 503-residue polypeptide: Probable cytosol aminopeptidase (503 aa).

Mn(2+)-binding residues include Lys270 and Asp275. Lys282 is a catalytic residue. Mn(2+) is bound by residues Asp293, Asp352, and Glu354. The active site involves Arg356.

Belongs to the peptidase M17 family. Requires Mn(2+) as cofactor.

It is found in the cytoplasm. It carries out the reaction Release of an N-terminal amino acid, Xaa-|-Yaa-, in which Xaa is preferably Leu, but may be other amino acids including Pro although not Arg or Lys, and Yaa may be Pro. Amino acid amides and methyl esters are also readily hydrolyzed, but rates on arylamides are exceedingly low.. The enzyme catalyses Release of an N-terminal amino acid, preferentially leucine, but not glutamic or aspartic acids.. Presumably involved in the processing and regular turnover of intracellular proteins. Catalyzes the removal of unsubstituted N-terminal amino acids from various peptides. In Citrobacter koseri (strain ATCC BAA-895 / CDC 4225-83 / SGSC4696), this protein is Probable cytosol aminopeptidase.